The following is a 49-amino-acid chain: Large ribosomal subunit protein bL33A (49 aa).

The protein belongs to the bacterial ribosomal protein bL33 family.

The protein is Large ribosomal subunit protein bL33A of Lactobacillus delbrueckii subsp. bulgaricus (strain ATCC 11842 / DSM 20081 / BCRC 10696 / JCM 1002 / NBRC 13953 / NCIMB 11778 / NCTC 12712 / WDCM 00102 / Lb 14).